Here is a 584-residue protein sequence, read N- to C-terminus: Outer membrane transporter CdiB-2 (584 aa).

The N-terminal stretch at 1 to 20 is a signal peptide; the sequence is MATRFAILPVTALITLTAQA. Over residues 24-44 the composition is skewed to low complexity; sequence PTPNDQAAAARANAEQNQQAQ. The interval 24–72 is disordered; that stretch reads PTPNDQAAAARANAEQNQQAQQRRDAQQRDATVQAPGVRSDVPRPEAYP. Residues 98 to 171 enclose the POTRA domain; it reads SKAQGASALP…GALKLALIPG (74 aa).

The protein belongs to the TPS (TC 1.B.20) family.

It is found in the cell outer membrane. Its function is as follows. Potential outer membrane protein component of a toxin-immunity protein module, which functions as a cellular contact-dependent growth inhibition (CDI) system. CDI modules allow bacteria to communicate with and inhibit the growth of closely related neighboring bacteria in a contact-dependent fashion. This protein may be required for secretion and assembly of the CdiA toxin protein. Expression of this cdiAIB locus in B.thailandensis confers protection against other bacteria carrying the locus; growth inhibition requires cellular contact. In terms of biological role, probable member of a two partner secretion pathway (TPS) in which it mediates the secretion of CdiA2. This is Outer membrane transporter CdiB-2 (cdiB2) from Burkholderia pseudomallei (strain 1026b).